Here is a 561-residue protein sequence, read N- to C-terminus: Carboxylesterase 1E (561 aa).

The N-terminal stretch at 1-18 (MCLYALILVFLAAFTAGG) is a signal peptide. Residues Asn79 and Asn107 are each glycosylated (N-linked (GlcNAc...) asparagine). Residues Cys87 and Cys116 are joined by a disulfide bond. Ser221 acts as the Acyl-ester intermediate in catalysis. Cysteines 273 and 284 form a disulfide. Catalysis depends on charge relay system residues Glu353 and His466. Residue Asn489 is glycosylated (N-linked (GlcNAc...) asparagine). Positions 558–561 (HTEL) match the Prevents secretion from ER motif.

This sequence belongs to the type-B carboxylesterase/lipase family. In terms of tissue distribution, expressed in liver.

The protein resides in the endoplasmic reticulum lumen. The protein localises to the microsome membrane. The enzyme catalyses a carboxylic ester + H2O = an alcohol + a carboxylate + H(+). The catalysed reaction is all-trans-retinyl hexadecanoate + H2O = all-trans-retinol + hexadecanoate + H(+). Involved in the detoxification of xenobiotics and in the activation of ester and amide prodrugs. Hydrolyzes retinyl esters. This Rattus norvegicus (Rat) protein is Carboxylesterase 1E (Ces1e).